We begin with the raw amino-acid sequence, 219 residues long: Casein kinase II subunit beta' (219 aa).

At Thr-2 the chain carries Phosphothreonine; by autocatalysis.

The protein belongs to the casein kinase 2 subunit beta family. In terms of assembly, tetramer of two alpha and two beta' subunits. In terms of processing, phosphorylated by alpha subunit.

Its function is as follows. Participates in Wnt signaling. Plays a complex role in regulating the basal catalytic activity of the alpha subunit. The chain is Casein kinase II subunit beta' (CkIIbeta2) from Drosophila melanogaster (Fruit fly).